Consider the following 260-residue polypeptide: Glutamate racemase (260 aa).

Residues 14-15 (DS) and 46-47 (YG) contribute to the substrate site. The Proton donor/acceptor role is filled by C77. 78–79 (NT) lines the substrate pocket. The active-site Proton donor/acceptor is C188. 189 to 190 (TH) serves as a coordination point for substrate.

It belongs to the aspartate/glutamate racemases family.

It catalyses the reaction L-glutamate = D-glutamate. It participates in cell wall biogenesis; peptidoglycan biosynthesis. Functionally, provides the (R)-glutamate required for cell wall biosynthesis. The polypeptide is Glutamate racemase (Clostridium perfringens (strain SM101 / Type A)).